An 89-amino-acid chain; its full sequence is Large ribosomal subunit protein bL27 (89 aa).

The disordered stretch occupies residues 1–21 (MAHKKAGGSSRNGRDSQSKRL).

Belongs to the bacterial ribosomal protein bL27 family.

In Rhizobium rhizogenes (strain K84 / ATCC BAA-868) (Agrobacterium radiobacter), this protein is Large ribosomal subunit protein bL27.